Consider the following 157-residue polypeptide: SsrA-binding protein (157 aa).

The segment covering 135–151 (DKRETEKKRDWSREKGR) has biased composition (basic and acidic residues). A disordered region spans residues 135–157 (DKRETEKKRDWSREKGRLLRARG).

This sequence belongs to the SmpB family.

The protein localises to the cytoplasm. Its function is as follows. Required for rescue of stalled ribosomes mediated by trans-translation. Binds to transfer-messenger RNA (tmRNA), required for stable association of tmRNA with ribosomes. tmRNA and SmpB together mimic tRNA shape, replacing the anticodon stem-loop with SmpB. tmRNA is encoded by the ssrA gene; the 2 termini fold to resemble tRNA(Ala) and it encodes a 'tag peptide', a short internal open reading frame. During trans-translation Ala-aminoacylated tmRNA acts like a tRNA, entering the A-site of stalled ribosomes, displacing the stalled mRNA. The ribosome then switches to translate the ORF on the tmRNA; the nascent peptide is terminated with the 'tag peptide' encoded by the tmRNA and targeted for degradation. The ribosome is freed to recommence translation, which seems to be the essential function of trans-translation. In Rhodopseudomonas palustris (strain BisB5), this protein is SsrA-binding protein.